The chain runs to 624 residues: Leucine-rich repeat and IQ domain-containing protein 3 (624 aa).

3 LRR repeats span residues 51 to 72 (SLRVCIFSNNFITDIHPLQSCI), 73 to 94 (KLIKLDLHGNQIKSLPNTKFWN), and 98 to 119 (NLKLLYLHDNGFAKLKNICVLS). One can recognise an LRRCT domain in the interval 132-179 (CPVSLKKGYRHVLVNSIWPLKALDHHVISDEEIIQNWHLPERFKACNH). The region spanning 215-244 (HNSPVLIVQRWIRGFLVRKNLSPVFFHKKK) is the IQ domain. Residues 553 to 614 (KQKLKAEKYR…TKVAIVKTNL (62 aa)) are a coiled coil.

The polypeptide is Leucine-rich repeat and IQ domain-containing protein 3 (LRRIQ3) (Homo sapiens (Human)).